The sequence spans 264 residues: Phosphate import ATP-binding protein PstB (264 aa).

An ABC transporter domain is found at 11 to 250; sequence LKAEALSVYY…DTTEKIFDSP (240 aa). 43 to 50 contributes to the ATP binding site; the sequence is GPSGCGKS.

This sequence belongs to the ABC transporter superfamily. Phosphate importer (TC 3.A.1.7) family. As to quaternary structure, the complex is composed of two ATP-binding proteins (PstB), two transmembrane proteins (PstC and PstA) and a solute-binding protein (PstS).

The protein localises to the cell inner membrane. The catalysed reaction is phosphate(out) + ATP + H2O = ADP + 2 phosphate(in) + H(+). Its function is as follows. Part of the ABC transporter complex PstSACB involved in phosphate import. Responsible for energy coupling to the transport system. The protein is Phosphate import ATP-binding protein PstB of Synechococcus sp. (strain ATCC 27144 / PCC 6301 / SAUG 1402/1) (Anacystis nidulans).